A 106-amino-acid polypeptide reads, in one-letter code: MVYQVKDKADLDGQLTKASGKLVVLDFFATWCGPCKMISPKLVELSTQFADNVVVLKVDVDECEDIAMEYNISSMPTFVFLKNGVKVEEFAGANAKRLEDVIKANI.

Positions 1–106 (MVYQVKDKAD…RLEDVIKANI (106 aa)) constitute a Thioredoxin domain. Catalysis depends on nucleophile residues Cys32 and Cys35. Residues Cys32 and Cys35 are joined by a disulfide bond.

Belongs to the thioredoxin family. As to quaternary structure, monomer.

Participates in various redox reactions through the reversible oxidation of its active center dithiol to a disulfide and catalyzes dithiol-disulfide exchange reactions. As a reducing substrate of peroxiredoxin 1, thioredoxin 2 is preferred over thioredoxin 1. The polypeptide is Thioredoxin-2 (Drosophila melanogaster (Fruit fly)).